A 57-amino-acid polypeptide reads, in one-letter code: U17-myrmicitoxin-Tb1a (57 aa).

A signal peptide spans methionine 1–serine 29. Positions aspartate 30–alanine 33 are excised as a propeptide. A disulfide bridge connects residues cysteine 42 and cysteine 53. Alanine 56 is subject to Alanine amide.

O-glycosylated. Expressed by the venom gland.

It is found in the secreted. Serine protease inhibitor which exhibits antifibrinolytic, antielastolytic and antimicrobial activities. Displays antimicrobial activity against bacteria and fungi. Likely functions in the innate immune response to microbial infection and possibly in the venom, as an antifibrinolytic agent. This chain is U17-myrmicitoxin-Tb1a, found in Tetramorium bicarinatum (Tramp ant).